The sequence spans 125 residues: Large ribosomal subunit protein bL20 (125 aa).

It belongs to the bacterial ribosomal protein bL20 family.

In terms of biological role, binds directly to 23S ribosomal RNA and is necessary for the in vitro assembly process of the 50S ribosomal subunit. It is not involved in the protein synthesizing functions of that subunit. The polypeptide is Large ribosomal subunit protein bL20 (Methylobacterium nodulans (strain LMG 21967 / CNCM I-2342 / ORS 2060)).